The following is an 88-amino-acid chain: Small ribosomal subunit protein bS16 (88 aa).

This sequence belongs to the bacterial ribosomal protein bS16 family.

The polypeptide is Small ribosomal subunit protein bS16 (Geobacter sp. (strain M21)).